Consider the following 494-residue polypeptide: Alanine--glyoxylate aminotransferase 2-like (494 aa).

Lysine 291 bears the N6-(pyridoxal phosphate)lysine mark.

Belongs to the class-III pyridoxal-phosphate-dependent aminotransferase family. Pyridoxal 5'-phosphate is required as a cofactor.

In Drosophila melanogaster (Fruit fly), this protein is Alanine--glyoxylate aminotransferase 2-like.